The primary structure comprises 370 residues: Dihydroorotate dehydrogenase (quinone) (370 aa).

FMN-binding positions include A67–K71 and T91. Substrate is bound at residue K71. A substrate-binding site is contributed by N116–F120. FMN contacts are provided by N146 and N179. N179 is a substrate binding site. The Nucleophile role is filled by S182. N184 is a binding site for substrate. Residues K222 and T250 each coordinate FMN. Residue N251–T252 coordinates substrate. FMN contacts are provided by residues G276, G305, and Y326–S327.

The protein belongs to the dihydroorotate dehydrogenase family. Type 2 subfamily. Monomer. Requires FMN as cofactor.

The protein resides in the cell membrane. It catalyses the reaction (S)-dihydroorotate + a quinone = orotate + a quinol. It functions in the pathway pyrimidine metabolism; UMP biosynthesis via de novo pathway; orotate from (S)-dihydroorotate (quinone route): step 1/1. Its function is as follows. Catalyzes the conversion of dihydroorotate to orotate with quinone as electron acceptor. The protein is Dihydroorotate dehydrogenase (quinone) of Streptomyces griseus subsp. griseus (strain JCM 4626 / CBS 651.72 / NBRC 13350 / KCC S-0626 / ISP 5235).